Consider the following 91-residue polypeptide: Transcription factor ILI7 (91 aa).

The 55-residue stretch at 4–58 folds into the bHLH domain; that stretch reads RSRSRASSAARITDEQIGDLVSKLQALLPEARLRSNDRVPSARVLQETCSYIRSL.

This sequence belongs to the bHLH protein family.

Functionally, atypical and probable non DNA-binding bHLH transcription factor that integrates multiple signaling pathways to regulate cell elongation and plant development. This chain is Transcription factor ILI7 (ILI7), found in Oryza sativa subsp. indica (Rice).